A 671-amino-acid chain; its full sequence is DEAD-box ATP-dependent RNA helicase 7 (671 aa).

Residues 1 to 84 (MPSLMLSDKK…EKKKSSKKVK (84 aa)) are disordered. The span at 26-41 (LDSKKGKKEQKLKLSD) shows a compositional bias: basic and acidic residues. Phosphoserine occurs at positions 40 and 42. The span at 50–60 (KKSKKKDKKRK) shows a compositional bias: basic residues. The Q motif signature appears at 96-124 (NAVSKFRISAPLREKLKANGIEALFPIQA). The 183-residue stretch at 127–309 (FDMVLDGADL…NRFLKRDQKT (183 aa)) folds into the Helicase ATP-binding domain. 140–147 (ARTGQGKT) lines the ATP pocket. A DEAD box motif is present at residues 255–258 (DEAD). The 141-residue stretch at 339–479 (LIPDIISCYS…HLAAPQPDEI (141 aa)) folds into the Helicase C-terminal domain. Positions 627-671 (EREPLPQKRFGGGGRGNRFGGGGGNRFGGGGGRGRGGSGGRGQRY) are disordered. Over residues 636-671 (FGGGGRGNRFGGGGGNRFGGGGGRGRGGSGGRGQRY) the composition is skewed to gly residues.

Belongs to the DEAD box helicase family. DDX21/DDX50 subfamily.

It localises to the nucleus. The enzyme catalyses ATP + H2O = ADP + phosphate + H(+). The protein is DEAD-box ATP-dependent RNA helicase 7 (RH7) of Arabidopsis thaliana (Mouse-ear cress).